Here is a 124-residue protein sequence, read N- to C-terminus: Small ribosomal subunit protein uS12 (124 aa).

The interval 1 to 30 (MPTIQQLVRKGRQDKVAKTKTAALKGSPQR) is disordered. D89 is modified (3-methylthioaspartic acid). The disordered stretch occupies residues 102-124 (ADTQGVKNRKQARSRYGAKKEKS). Residues 108–118 (KNRKQARSRYG) show a composition bias toward basic residues.

It belongs to the universal ribosomal protein uS12 family. As to quaternary structure, part of the 30S ribosomal subunit. Contacts proteins S8 and S17. May interact with IF1 in the 30S initiation complex.

In terms of biological role, with S4 and S5 plays an important role in translational accuracy. Functionally, interacts with and stabilizes bases of the 16S rRNA that are involved in tRNA selection in the A site and with the mRNA backbone. Located at the interface of the 30S and 50S subunits, it traverses the body of the 30S subunit contacting proteins on the other side and probably holding the rRNA structure together. The combined cluster of proteins S8, S12 and S17 appears to hold together the shoulder and platform of the 30S subunit. The polypeptide is Small ribosomal subunit protein uS12 (Saccharopolyspora erythraea (strain ATCC 11635 / DSM 40517 / JCM 4748 / NBRC 13426 / NCIMB 8594 / NRRL 2338)).